We begin with the raw amino-acid sequence, 197 residues long: Imidazoleglycerol-phosphate dehydratase (197 aa).

This sequence belongs to the imidazoleglycerol-phosphate dehydratase family.

It is found in the cytoplasm. It catalyses the reaction D-erythro-1-(imidazol-4-yl)glycerol 3-phosphate = 3-(imidazol-4-yl)-2-oxopropyl phosphate + H2O. It functions in the pathway amino-acid biosynthesis; L-histidine biosynthesis; L-histidine from 5-phospho-alpha-D-ribose 1-diphosphate: step 6/9. This chain is Imidazoleglycerol-phosphate dehydratase, found in Leptospira biflexa serovar Patoc (strain Patoc 1 / Ames).